Here is an 85-residue protein sequence, read N- to C-terminus: MKTVFAILFLAFIALTYARSYEDVKEEIKNEIEKEILEDLEEESDELNDKSKEINDAKPWRWVRRIRWRKLVPYIPAVVAAAGKK.

The signal sequence occupies residues 1-18 (MKTVFAILFLAFIALTYA). Positions 19-57 (RSYEDVKEEIKNEIEKEILEDLEEESDELNDKSKEINDA) are excised as a propeptide. The residue at position 82 (A82) is an Alanine amide.

This sequence belongs to the arminin family. As to expression, expressed in entodermal epithelium along the body column.

The protein localises to the secreted. The protein resides in the target cell membrane. Functionally, antimicrobial peptide with a broad-spectrum antimicrobial activity. Keeps its antibacterial activity under a wide range of salt concentrations that mimic physiological conditions of human blood, which is surprising, since Hydra is an obligate freshwater animal with nearly no salt tolerance. Does not affect red blood cells. This Hydra vulgaris (Hydra) protein is Arminin 2b.